Consider the following 210-residue polypeptide: Transcriptional regulator DauR (210 aa).

The protein belongs to the DauR family.

DauR represses the dauBAR operon. This chain is Transcriptional regulator DauR, found in Pseudomonas aeruginosa (strain ATCC 15692 / DSM 22644 / CIP 104116 / JCM 14847 / LMG 12228 / 1C / PRS 101 / PAO1).